The primary structure comprises 192 residues: CASP-like protein 4C1 (192 aa).

Residues 1–11 are compositionally biased toward polar residues; that stretch reads MRSPQSLRNGE. Residues 1–23 are disordered; the sequence is MRSPQSLRNGETPSPSPRPPRFP. The Cytoplasmic portion of the chain corresponds to 1 to 40; that stretch reads MRSPQSLRNGETPSPSPRPPRFPTPHFHSTVSLQKLKRFN. Pro residues predominate over residues 14 to 23; it reads SPSPRPPRFP. A helical membrane pass occupies residues 41-61; the sequence is LLILVFRLSTFCFSLASSVFM. The Extracellular portion of the chain corresponds to 62-75; the sequence is LTNPTWYHFDAFRY. A helical membrane pass occupies residues 76-96; that stretch reads VFAANAIVAIYSLFEMAASVW. Residues 97–107 lie on the Cytoplasmic side of the membrane; sequence EISRGNTLFPE. A helical transmembrane segment spans residues 108 to 128; that stretch reads ILQVWFDFGHDQVFAYLLLSA. The Extracellular segment spans residues 129–156; that stretch reads DSAATALAKTLKGGDTCAASNAFCVQSY. Residues 157 to 177 form a helical membrane-spanning segment; it reads IAIALGFAGFLFLGLSSLLSG. The Cytoplasmic segment spans residues 178 to 192; the sequence is FRVVCFLINGSRFYV.

Belongs to the Casparian strip membrane proteins (CASP) family. As to quaternary structure, homodimer and heterodimers.

The protein localises to the cell membrane. This is CASP-like protein 4C1 from Ricinus communis (Castor bean).